The following is a 912-amino-acid chain: Probable dipeptidyl-aminopeptidase B (912 aa).

The disordered stretch occupies residues 1–74 (MSSALSPEGD…GPFLGPGASL (74 aa)). At 1 to 85 (MSSALSPEGD…REPMDRGLRR (85 aa)) the chain is on the cytoplasmic side. A compositionally biased stretch (low complexity) spans 16–27 (DSLSSVSTTSLV). The segment covering 30-50 (RIQEKTEMDADNDKEKDPRAL) has biased composition (basic and acidic residues). The span at 51-63 (DDEDPLRDEDDLE) shows a compositional bias: acidic residues. Residues 86–106 (ILIIVAVVFIGGWLAGLGIFI) traverse the membrane as a helical; Signal-anchor for type II membrane protein segment. Residues 107–912 (ASGSYHHESD…KRHMVPQALV (806 aa)) lie on the Vacuolar side of the membrane. N-linked (GlcNAc...) asparagine glycosylation is present at Asn344. Ser749 (charge relay system) is an active-site residue. A glycan (N-linked (GlcNAc...) asparagine) is linked at Asn808. Active-site charge relay system residues include Asp826 and His859. Residues 892-912 (PQPQKDPVEKEKRHMVPQALV) are disordered.

The protein belongs to the peptidase S9B family.

The protein resides in the vacuole membrane. The enzyme catalyses Release of an N-terminal dipeptide, Xaa-Yaa-|-Zaa-, from a polypeptide, preferentially when Yaa is Pro, provided Zaa is neither Pro nor hydroxyproline.. In terms of biological role, type IV dipeptidyl-peptidase which removes N-terminal dipeptides sequentially from polypeptides having unsubstituted N-termini provided that the penultimate residue is proline. This chain is Probable dipeptidyl-aminopeptidase B (DAPB), found in Fusarium vanettenii (strain ATCC MYA-4622 / CBS 123669 / FGSC 9596 / NRRL 45880 / 77-13-4) (Fusarium solani subsp. pisi).